A 607-amino-acid chain; its full sequence is MFPQKITLWLYPLGLFANLFFGTAFCVQWFLIKKRGCSFVPKIFWHLSCSGAVLMICHGFIQSQYPIALLHSFNLIIYFRNLNIASSTPLPISKIVSLLVVSATAITLSFAIGTQYLPHMTWMASPNILHLNLPEANFLWQLIGCIGLTIFSLRFFIQWFYLEYKNQSSLPTPFWKASLVGGSICLIYFLRTGDIVNVLCYGCGLFPSLANLRIASREAIQKPFSCSCFISAGEHSGDTLGGNLLKEIHAKYPDIHCFGVGGPQMRAQNFCTLFSMEKFQISGFWEVLLALPKLWYRRRILYKTILKRNPQAVICIDFPDFHFLLIKKLRSLGYKGKIVHYVCPSIWAWRPSRKTTLEKYLDLLLLILPFEQKLFKDSPLRTVYIGHPLSETIKLFCPKQNWKERLHLPTDKPFVAAFPGSRHSDILRNLTIQVQAFQASDFASTHHLLVSSANPAYDHLILEILQQNRCLHSNIVPSQFRYELMRECDCALAKCGTIVLETALNLTPTIVTCQLRPLDTFLAKYIFNIILPAYSLPNIILGRTIFPEFIGGKKDFRYEDVAAALNILKTSQAQEKQKNACKDVYQAINESASTIKECLPFIFEASY.

A unknown region spans residues 1-224 (MFPQKITLWL…ASREAIQKPF (224 aa)). The segment at 225 to 607 (SCSCFISAGE…CLPFIFEASY (383 aa)) is lipid-A-disaccharide synthase.

It in the C-terminal section; belongs to the LpxB family.

It carries out the reaction a lipid X + a UDP-2-N,3-O-bis[(3R)-3-hydroxyacyl]-alpha-D-glucosamine = a lipid A disaccharide + UDP + H(+). Its pathway is bacterial outer membrane biogenesis; LPS lipid A biosynthesis. Functionally, condensation of UDP-2,3-diacylglucosamine and 2,3-diacylglucosamine-1-phosphate to form lipid A disaccharide, a precursor of lipid A, a phosphorylated glycolipid that anchors the lipopolysaccharide to the outer membrane of the cell. The polypeptide is Lipid-A-disaccharide synthase (lpxB) (Chlamydia muridarum (strain MoPn / Nigg)).